We begin with the raw amino-acid sequence, 512 residues long: Ribose import ATP-binding protein RbsA (512 aa).

ABC transporter domains follow at residues 6-242 (LELR…VNRE) and 252-496 (VPAG…TGAQ). An ATP-binding site is contributed by 38–45 (GENGAGKS).

The protein belongs to the ABC transporter superfamily. Ribose importer (TC 3.A.1.2.1) family. As to quaternary structure, the complex is composed of an ATP-binding protein (RbsA), two transmembrane proteins (RbsC) and a solute-binding protein (RbsB).

It is found in the cell inner membrane. It catalyses the reaction D-ribose(out) + ATP + H2O = D-ribose(in) + ADP + phosphate + H(+). Part of the ABC transporter complex RbsABC involved in ribose import. Responsible for energy coupling to the transport system. This Pseudomonas putida (strain ATCC 47054 / DSM 6125 / CFBP 8728 / NCIMB 11950 / KT2440) protein is Ribose import ATP-binding protein RbsA.